The chain runs to 337 residues: Holliday junction branch migration complex subunit RuvB (337 aa).

The interval 1–182 (MEDRMVSASY…FGVLSAMEFY (182 aa)) is large ATPase domain (RuvB-L). ATP contacts are provided by L21, R22, G63, K66, T67, T68, R172, Y182, and R219. T67 contributes to the Mg(2+) binding site. Residues 183–253 (NEDELKEIIL…IAKNALSLLE (71 aa)) form a small ATPAse domain (RuvB-S) region. The segment at 256–337 (GEGFDKIDNK…REFKEQTKLT (82 aa)) is head domain (RuvB-H). DNA is bound by residues R311 and R316.

This sequence belongs to the RuvB family. In terms of assembly, homohexamer. Forms an RuvA(8)-RuvB(12)-Holliday junction (HJ) complex. HJ DNA is sandwiched between 2 RuvA tetramers; dsDNA enters through RuvA and exits via RuvB. An RuvB hexamer assembles on each DNA strand where it exits the tetramer. Each RuvB hexamer is contacted by two RuvA subunits (via domain III) on 2 adjacent RuvB subunits; this complex drives branch migration. In the full resolvosome a probable DNA-RuvA(4)-RuvB(12)-RuvC(2) complex forms which resolves the HJ.

It localises to the cytoplasm. The catalysed reaction is ATP + H2O = ADP + phosphate + H(+). Functionally, the RuvA-RuvB-RuvC complex processes Holliday junction (HJ) DNA during genetic recombination and DNA repair, while the RuvA-RuvB complex plays an important role in the rescue of blocked DNA replication forks via replication fork reversal (RFR). RuvA specifically binds to HJ cruciform DNA, conferring on it an open structure. The RuvB hexamer acts as an ATP-dependent pump, pulling dsDNA into and through the RuvAB complex. RuvB forms 2 homohexamers on either side of HJ DNA bound by 1 or 2 RuvA tetramers; 4 subunits per hexamer contact DNA at a time. Coordinated motions by a converter formed by DNA-disengaged RuvB subunits stimulates ATP hydrolysis and nucleotide exchange. Immobilization of the converter enables RuvB to convert the ATP-contained energy into a lever motion, pulling 2 nucleotides of DNA out of the RuvA tetramer per ATP hydrolyzed, thus driving DNA branch migration. The RuvB motors rotate together with the DNA substrate, which together with the progressing nucleotide cycle form the mechanistic basis for DNA recombination by continuous HJ branch migration. Branch migration allows RuvC to scan DNA until it finds its consensus sequence, where it cleaves and resolves cruciform DNA. The chain is Holliday junction branch migration complex subunit RuvB from Clostridium novyi (strain NT).